We begin with the raw amino-acid sequence, 384 residues long: UDP-N-acetylglucosamine--N-acetylmuramyl-(pentapeptide) pyrophosphoryl-undecaprenol N-acetylglucosamine transferase (384 aa).

Residues 22-24 (TGG), Arg179, Ser209, and Gln312 each bind UDP-N-acetyl-alpha-D-glucosamine.

This sequence belongs to the glycosyltransferase 28 family. MurG subfamily.

The protein resides in the cell inner membrane. It carries out the reaction di-trans,octa-cis-undecaprenyl diphospho-N-acetyl-alpha-D-muramoyl-L-alanyl-D-glutamyl-meso-2,6-diaminopimeloyl-D-alanyl-D-alanine + UDP-N-acetyl-alpha-D-glucosamine = di-trans,octa-cis-undecaprenyl diphospho-[N-acetyl-alpha-D-glucosaminyl-(1-&gt;4)]-N-acetyl-alpha-D-muramoyl-L-alanyl-D-glutamyl-meso-2,6-diaminopimeloyl-D-alanyl-D-alanine + UDP + H(+). It participates in cell wall biogenesis; peptidoglycan biosynthesis. In terms of biological role, cell wall formation. Catalyzes the transfer of a GlcNAc subunit on undecaprenyl-pyrophosphoryl-MurNAc-pentapeptide (lipid intermediate I) to form undecaprenyl-pyrophosphoryl-MurNAc-(pentapeptide)GlcNAc (lipid intermediate II). This Treponema pallidum (strain Nichols) protein is UDP-N-acetylglucosamine--N-acetylmuramyl-(pentapeptide) pyrophosphoryl-undecaprenol N-acetylglucosamine transferase.